We begin with the raw amino-acid sequence, 349 residues long: DNA-directed RNA polymerase subunit Rpo1N (349 aa).

Positions 306 to 349 are disordered; that stretch reads EDEGEEFAGEQATNLSESADDRMDRDRPSSHGAAPIDVPEVGDD. The span at 324 to 334 shows a compositional bias: basic and acidic residues; sequence ADDRMDRDRPS.

It belongs to the RNA polymerase beta' chain family. As to quaternary structure, part of the RNA polymerase complex.

It is found in the cytoplasm. It catalyses the reaction RNA(n) + a ribonucleoside 5'-triphosphate = RNA(n+1) + diphosphate. DNA-dependent RNA polymerase (RNAP) catalyzes the transcription of DNA into RNA using the four ribonucleoside triphosphates as substrates. Forms the clamp head domain. The sequence is that of DNA-directed RNA polymerase subunit Rpo1N from Halococcus morrhuae (Micrococcus morrhuae).